The primary structure comprises 671 residues: Vinexin (671 aa).

An N-acetylalanine modification is found at Gln-2. Residue Arg-6 is modified to Phosphoserine. 5 disordered regions span residues Leu-46 to Ser-111, Thr-166 to Ala-215, Leu-249 to Ser-268, Thr-295 to Ser-324, and Ser-337 to Lys-383. Residues Pro-88–Thr-108 are compositionally biased toward polar residues. Residues Asp-115 to Pro-187 enclose the SoHo domain. Ser-348 is modified (phosphoserine). The span at Pro-359–Ser-368 shows a compositional bias: polar residues. 2 SH3 domains span residues Lys-380 to Ala-439 and Leu-454 to Glu-515. The segment at Lys-380–Glu-515 is binds to vinculin. Position 395 is a phosphoserine (Ser-395). The segment at Arg-519–Gln-611 is disordered. The residue at position 530 (Ser-530) is a Phosphoserine; by MAPK1. A compositionally biased stretch (low complexity) spans Ala-535–Ala-553. A phosphoserine mark is found at Ser-544, Ser-545, Ser-547, Ser-551, and Ser-563. A compositionally biased stretch (polar residues) spans Gly-560–Gly-584. The region spanning Ile-612–Val-671 is the SH3 3 domain. The binds to SOS stretch occupies residues Ile-612 to Val-671.

In terms of assembly, interacts with DLG5 through its third SH3 domain. Interacts with vinculin by the first two SH3 domains and the proline rich region of vinculin. Binds to SOS (guanine nucleotide exchange factor of RAS and RAC), through its third SH3 domain. The formation of this complex is down-regulated by phosphorylation of SOS. Interacts with INPPL1/SHIP2, SAFB2, SOCS7 and SRCIN1. Interacts with FASLG. Interacts with MAPK1/ERK2. Phosphorylated at Ser-530 by MAPK1/ERK2 during cell spreading. As to expression, both isoforms are expressed in different tissues like heart, placenta, brain, skeletal muscle and pancreas. Isoform beta is especially found in liver.

Its subcellular location is the cell junction. It localises to the cytoplasm. The protein resides in the cytoskeleton. The protein localises to the nucleus. In terms of biological role, vinexin alpha isoform promotes up-regulation of actin stress fiber formation. Vinexin beta isoform plays a role in cell spreading and enhances the activation of JNK/SAPK in response to EGF stimulation by using its third SH3 domain. The protein is Vinexin (SORBS3) of Homo sapiens (Human).